The chain runs to 153 residues: Pheromone-binding protein Gp-9 (153 aa).

The N-terminal stretch at 1–19 is a signal peptide; that stretch reads MKTFVLHIFIFALVAFASA. 3 disulfides stabilise this stretch: Cys-37–Cys-77, Cys-73–Cys-129, and Cys-118–Cys-138.

The protein belongs to the PBP/GOBP family. As to quaternary structure, homodimer.

The protein resides in the secreted. In terms of biological role, colony queen number, a major feature of social organization, is associated with worker genotype for Gp-9. Colonies are headed by either a single reproductive queen (monogyne form) or multiple queens (polygyne form). Differences in worker Gp-9 genotypes between social forms may cause differences in workers' abilities to recognize queens and regulate their numbers. The chain is Pheromone-binding protein Gp-9 from Solenopsis richteri (Black imported fire ant).